The chain runs to 72 residues: Translation initiation factor IF-1 (72 aa).

Residues 1–72 enclose the S1-like domain; the sequence is MAKEELLEFP…TKGRITYRFK (72 aa).

The protein belongs to the IF-1 family. Component of the 30S ribosomal translation pre-initiation complex which assembles on the 30S ribosome in the order IF-2 and IF-3, IF-1 and N-formylmethionyl-tRNA(fMet); mRNA recruitment can occur at any time during PIC assembly.

The protein localises to the cytoplasm. Its function is as follows. One of the essential components for the initiation of protein synthesis. Stabilizes the binding of IF-2 and IF-3 on the 30S subunit to which N-formylmethionyl-tRNA(fMet) subsequently binds. Helps modulate mRNA selection, yielding the 30S pre-initiation complex (PIC). Upon addition of the 50S ribosomal subunit IF-1, IF-2 and IF-3 are released leaving the mature 70S translation initiation complex. This chain is Translation initiation factor IF-1, found in Maricaulis maris (strain MCS10) (Caulobacter maris).